The sequence spans 179 residues: Sec-independent protein translocase protein TatB (179 aa).

The chain crosses the membrane as a helical span at residues 2-22; sequence FNGVGWGEVVVLLLIGLFVFG. The segment covering 98-109 has biased composition (low complexity); sequence LLGDDPPAAPSL. The tract at residues 98-179 is disordered; sequence LLGDDPPAAP…TEVPFDSDAT (82 aa).

This sequence belongs to the TatB family. As to quaternary structure, the Tat system comprises two distinct complexes: a TatABC complex, containing multiple copies of TatA, TatB and TatC subunits, and a separate TatA complex, containing only TatA subunits. Substrates initially bind to the TatABC complex, which probably triggers association of the separate TatA complex to form the active translocon.

The protein resides in the cell membrane. Part of the twin-arginine translocation (Tat) system that transports large folded proteins containing a characteristic twin-arginine motif in their signal peptide across membranes. Together with TatC, TatB is part of a receptor directly interacting with Tat signal peptides. TatB may form an oligomeric binding site that transiently accommodates folded Tat precursor proteins before their translocation. This chain is Sec-independent protein translocase protein TatB, found in Frankia casuarinae (strain DSM 45818 / CECT 9043 / HFP020203 / CcI3).